The sequence spans 819 residues: Nonribosomal peptide synthetase 9 (819 aa).

The segment at 202 to 591 (LQAPTQHAVR…GRKDTQAKIR (390 aa)) is adenylation (A) domain. Residues 722–798 (QPRNERERLI…SLAEFLSSSS (77 aa)) form the Carrier domain. O-(pantetheine 4'-phosphoryl)serine is present on serine 759.

Belongs to the NRP synthetase family.

The protein operates within secondary metabolite biosynthesis. In terms of biological role, nonribosomal peptide synthetase; part of the Fg3_54/C64 gene cluster that mediates the biosynthesis of the octapeptide fusaoctaxin A, a virulence factor that is required for cell-to-cell invasiveness of plant host. The 2 nonribosomal peptide synthetases NRPS9 and NRPS5 form an assembly line which likely utilizes GABA as a starter unit (loaded on the unique module M1 of NRPS9) and sequentially incorporates seven extender units composed of the residues L-Ala, L-allo-Ile, L-Ser, L-Val, L-Ser, L-Leu and L-Leu, respectively. During the process, each of the residues that are tethered on modules M3-M7 of NRPS5 containing an E domain can undergo an epimerization reaction to produce a D-configuration before the transpeptidation reaction occurs. The elongation of the peptidyl chain might be terminated by module M8-mediated L-Leu incorporation, followed by R domain-catalyzed 4 electron reduction to release the resulting octapeptide from the assembly line as an alcohol. Fusaoctaxin A is cleaved by the cluster specific ABC transporter FGM5 to the pentapeptide fusapentaxin A and the tripeptide fusatrixin A. The other enzymes from the cluster, FGM1, FGM2, FGM3 and FGM9 seem not to be involved in the biosynthesis of fusaoctaxin A and their functions have still to be determined. The polypeptide is Nonribosomal peptide synthetase 9 (Gibberella zeae (strain ATCC MYA-4620 / CBS 123657 / FGSC 9075 / NRRL 31084 / PH-1) (Wheat head blight fungus)).